Here is a 5193-residue protein sequence, read N- to C-terminus: Usherin (5193 aa).

The first 34 residues, 1-34, serve as a signal peptide directing secretion; it reads MHYLALSPGFLCYTIKTLILAYLASVLVLAASQG. The Extracellular portion of the chain corresponds to 35 to 5033; it reads VFPRLENVGA…KSTEFYSELW (4999 aa). Residues Asn230, Asn258, Asn274, Asn358, Asn415, Asn448, and Asn469 are each glycosylated (N-linked (GlcNAc...) asparagine). The region spanning 268–514 is the Laminin N-terminal domain; sequence QDFRLYNVSL…AVDEIIVSGR (247 aa). 24 disulfide bridges follow: Cys515–Cys524, Cys517–Cys533, Cys535–Cys546, Cys549–Cys569, Cys572–Cys581, Cys574–Cys602, Cys605–Cys614, Cys617–Cys635, Cys638–Cys652, Cys640–Cys659, Cys661–Cys670, Cys673–Cys688, Cys691–Cys705, Cys693–Cys712, Cys714–Cys723, Cys726–Cys741, Cys744–Cys756, Cys746–Cys763, Cys765–Cys774, Cys777–Cys789, Cys792–Cys805, Cys794–Cys812, Cys814–Cys823, and Cys826–Cys846. 10 consecutive Laminin EGF-like domains span residues 515–571, 572–637, 638–690, 691–743, 744–791, 792–848, 853–896, 897–947, 948–998, and 999–1049; these read CQCH…NCKP, CQCH…ACKL, CDCN…GCRP, CNCN…GCEP, CQCN…ACEV, CDCS…NCEK, NGSL…GCQA, CDCD…GCLP, CLCH…RCRP, and CHCH…GCSK. The N-linked (GlcNAc...) asparagine glycan is linked to Asn647. 2 N-linked (GlcNAc...) asparagine glycosylation sites follow: Asn836 and Asn853. 14 disulfides stabilise this stretch: Cys867/Cys876, Cys879/Cys894, Cys897/Cys910, Cys899/Cys917, Cys919/Cys928, Cys931/Cys945, Cys948/Cys960, Cys950/Cys967, Cys969/Cys979, Cys982/Cys996, Cys999/Cys1011, Cys1001/Cys1018, Cys1020/Cys1029, and Cys1032/Cys1047. An N-linked (GlcNAc...) asparagine glycan is attached at Asn885. Asn941 is a glycosylation site (N-linked (GlcNAc...) asparagine). Residue Asn1008 is glycosylated (N-linked (GlcNAc...) asparagine). 5 consecutive Fibronectin type-III domains span residues 1055–1143, 1147–1241, 1242–1357, 1358–1462, and 1463–1566; these read PPPR…TKPE, GHLN…APPQ, TQGP…SVPV, FMAP…AAPA, and QLRP…LQLK. Asn1068, Asn1089, Asn1150, Asn1171, and Asn1222 each carry an N-linked (GlcNAc...) asparagine glycan. N-linked (GlcNAc...) asparagine glycosylation is found at Asn1382, Asn1473, and Asn1626. 2 consecutive Laminin G-like domains span residues 1511–1700 and 1705–1882; these read TKGT…WEGC and EEGV…QDGC. A disulfide bridge links Cys1663 with Cys1700. A glycan (N-linked (GlcNAc...) asparagine) is linked at Asn1770. 13 consecutive Fibronectin type-III domains span residues 1847–1946, 1948–2045, 2046–2132, 2133–2234, 2235–2321, 2322–2421, 2422–2525, 2526–2613, 2617–2713, 2717–2810, 2811–2914, 2918–3009, and 3013–3103; these read EPGF…TAPQ, VPTP…TPQE, APQE…TAQL, PPEQ…IPEG, VPAP…APPE, GVVN…SVEM, PPGA…DKPG, PIDA…TLPG, GIPS…TRPC, GVQP…THPA, PPQE…TLAG, RGAT…MWEE, and GMLP…TPSD. Cys1853 and Cys1882 are disulfide-bonded. An N-linked (GlcNAc...) asparagine glycan is attached at Asn1894. Positions 1931–1955 are disordered; the sequence is VSSDWSRGRTLGTAPQSVPTPSRAQ. The span at 1943 to 1955 shows a compositional bias: polar residues; that stretch reads TAPQSVPTPSRAQ. Asn1958, Asn2095, Asn2121, Asn2177, Asn2186, Asn2249, Asn2276, Asn2313, Asn2368, and Asn2404 each carry an N-linked (GlcNAc...) asparagine glycan. Residues Asn2575, Asn2647, Asn2701, Asn2761, and Asn2779 are each glycosylated (N-linked (GlcNAc...) asparagine). 7 N-linked (GlcNAc...) asparagine glycosylation sites follow: Asn2928, Asn2998, Asn3023, Asn3090, Asn3208, Asn3322, and Asn3411. Fibronectin type-III domains are found at residues 3395–3489, 3490–3580, 3581–3671, 3672–3766, 3769–3857, 3858–3955, 3956–4059, 4060–4148, 4149–4256, 4257–4346, 4347–4437, 4438–4522, 4523–4625, 4628–4725, 4726–4818, 4819–4921, and 4922–5005; these read CPAT…TRED, VPEG…TTQR, SPEN…TLQA, APQG…TPED, PPCN…TLEA, APVG…TLEA, PPRG…SAPS, GLMN…APPD, TQMA…APPD, GLSP…TPEV, PPSE…APPE, NMDP…TSPS, APSG…VPPL, PAPH…TGPA, PPEG…THPA, PPSG…TKKE, and MPQY…YDAA. N-linked (GlcNAc...) asparagine glycans are attached at residues Asn3589, Asn3645, Asn3686, Asn3712, Asn3723, and Asn3772. Residues Asn3976, Asn4063, Asn4194, Asn4218, Asn4304, Asn4340, Asn4365, and Asn4410 are each glycosylated (N-linked (GlcNAc...) asparagine). Residues Asn4556, Asn4575, Asn4683, Asn4716, Asn4746, Asn4756, Asn4765, Asn4915, and Asn4934 are each glycosylated (N-linked (GlcNAc...) asparagine). The chain crosses the membrane as a helical span at residues 5034–5054; that stretch reads FIMVMAVVGLILLAIFLSLIL. The Cytoplasmic portion of the chain corresponds to 5055–5193; the sequence is QRKIHKEPCI…EHTAFTDTHL (139 aa). The short motif at 5191-5193 is the PDZ-binding element; sequence THL.

Interacts with collagen IV and fibronectin via its laminin EGF-like domains. Interaction with collagen may be required for stable integration into the basement membrane. Interacts with NINL. Interacts with USH1C. Component of USH2 complex, composed of ADGRV1, PDZD7, USH2A and WHRN. Interacts with ADGRV1/MASS1 (via N-terminal PDZ domain). Interacts (via the cytoplasmic region) with WHRN. Interacts (via the cytoplasmic region) with PDZD7. Interacts (via the cytoplasmic region) with VEZT and MYO7A (via MyTH4-FERM domains); the interaction associates VEZT with the USH2 complex at the stereocilia base. As to expression, present in the testis, epididymis, oviduct, spleen, submaxillary gland, and small and large intestines. Not detected in the brain, skin, lung, skeletal muscle, cardiac muscle, liver or kidney. Expressed in smooth muscle of the colon and the epididymis. Also present in select vascular basement membranes. In the cochlea, it is present in virtually every basement membrane. It is particularly high in the strial capillary basement membranes (SCBMs). In the retina, it is again expressed in all of the basement membranes. It is also very prevalent in the lens capsule and the Bruch's layer between the retinal pigment epithelium and the choroid layer, which is very rich in basement membranes. In neonates in it is widely expressed in the basement membranes of the cochlea. Present in the synaptic terminals of retinal photoreceptors (at protein level).

It localises to the cell projection. Its subcellular location is the stereocilium membrane. The protein localises to the photoreceptor inner segment. It is found in the secreted. Its function is as follows. Involved in hearing and vision as member of the USH2 complex. In the inner ear, required for the maintenance of hair bundle ankle formation, which connects growing stereocilia in developing cochlear hair cells. In retina photoreceptors, the USH2 complex is required for the maintenance of periciliary membrane complex that seems to play a role in regulating intracellular protein transport. The chain is Usherin (Ush2A) from Mus musculus (Mouse).